The following is an 85-amino-acid chain: MAHKKGQGSSRNGRDSPGQRRGIKVYGSEKVVAGNILVRQVGTLVHPGQNVGMGKDFTLFALIDGTVKYSRTRGDRRVVSVLPGA.

The disordered stretch occupies residues 1 to 22 (MAHKKGQGSSRNGRDSPGQRRG).

The protein belongs to the bacterial ribosomal protein bL27 family.

The protein is Large ribosomal subunit protein bL27 of Anaeromyxobacter dehalogenans (strain 2CP-1 / ATCC BAA-258).